The sequence spans 399 residues: L-asparaginase-like protein GG20738 (399 aa).

The signal sequence occupies residues 1 to 22 (MLAQSCCLRLLILLLLCKSTCS). Intrachain disulfides connect Cys90–Cys95, Cys189–Cys205, and Cys344–Cys371.

It belongs to the Ntn-hydrolase family.

In Drosophila erecta (Fruit fly), this protein is L-asparaginase-like protein GG20738.